The chain runs to 365 residues: Pheromone M-factor receptor (365 aa).

Transmembrane regions (helical) follow at residues 7-24 (FYQFYAYFALVLSIPILY), 31-54 (NIPCLLLLFWLTLTTLIYVVESAI), 73-100 (ITSRIVTCSSIGIPASAFTLVLYLDTVI), 116-133 (VCLSILLPLIIMAMMVPL), 155-182 (YTLLFFYIPPCLLSFGGLFFVSRIVVLY), 204-226 (FLRLLCLAAVFFLGYFPLTIFMV), and 265-283 (VPPTVLYLMSLFFSTSGGW).

It belongs to the G-protein coupled receptor 4 family.

The protein localises to the membrane. Receptor for the peptide pheromone M-factor, a mating factor of S.pombe. Pheromone signaling is essential for initiation of meiosis in S.pombe; M-factor signaling alone may be sufficient. The chain is Pheromone M-factor receptor (map3) from Schizosaccharomyces pombe (strain 972 / ATCC 24843) (Fission yeast).